Reading from the N-terminus, the 411-residue chain is Serine hydroxymethyltransferase (411 aa).

(6S)-5,6,7,8-tetrahydrofolate contacts are provided by residues Leu-113 and 117–119 (GHL). Lys-222 carries the post-translational modification N6-(pyridoxal phosphate)lysine. (6S)-5,6,7,8-tetrahydrofolate is bound at residue 346 to 348 (SPF).

Belongs to the SHMT family. As to quaternary structure, homodimer. Pyridoxal 5'-phosphate serves as cofactor.

It localises to the cytoplasm. It carries out the reaction (6R)-5,10-methylene-5,6,7,8-tetrahydrofolate + glycine + H2O = (6S)-5,6,7,8-tetrahydrofolate + L-serine. The protein operates within one-carbon metabolism; tetrahydrofolate interconversion. Its pathway is amino-acid biosynthesis; glycine biosynthesis; glycine from L-serine: step 1/1. Its function is as follows. Catalyzes the reversible interconversion of serine and glycine with tetrahydrofolate (THF) serving as the one-carbon carrier. This reaction serves as the major source of one-carbon groups required for the biosynthesis of purines, thymidylate, methionine, and other important biomolecules. Also exhibits THF-independent aldolase activity toward beta-hydroxyamino acids, producing glycine and aldehydes, via a retro-aldol mechanism. The chain is Serine hydroxymethyltransferase from Prochlorococcus marinus (strain NATL2A).